A 642-amino-acid polypeptide reads, in one-letter code: Chaperone protein DnaK (642 aa).

Thr198 carries the phosphothreonine; by autocatalysis modification. Residues 602–642 (EAAGGAEAEAAAGGHGGASGSHDDKVVDADFEEVDGDKKGK) form a disordered region. Positions 603-613 (AAGGAEAEAAA) are enriched in low complexity.

It belongs to the heat shock protein 70 family.

In terms of biological role, acts as a chaperone. The polypeptide is Chaperone protein DnaK (Paramagnetospirillum magneticum (strain ATCC 700264 / AMB-1) (Magnetospirillum magneticum)).